Here is a 468-residue protein sequence, read N- to C-terminus: 3-isopropylmalate dehydratase large subunit (468 aa).

[4Fe-4S] cluster-binding residues include Cys347, Cys408, and Cys411.

This sequence belongs to the aconitase/IPM isomerase family. LeuC type 1 subfamily. As to quaternary structure, heterodimer of LeuC and LeuD. The cofactor is [4Fe-4S] cluster.

It carries out the reaction (2R,3S)-3-isopropylmalate = (2S)-2-isopropylmalate. The protein operates within amino-acid biosynthesis; L-leucine biosynthesis; L-leucine from 3-methyl-2-oxobutanoate: step 2/4. Catalyzes the isomerization between 2-isopropylmalate and 3-isopropylmalate, via the formation of 2-isopropylmaleate. This chain is 3-isopropylmalate dehydratase large subunit, found in Janthinobacterium sp. (strain Marseille) (Minibacterium massiliensis).